Reading from the N-terminus, the 459-residue chain is 23S rRNA (uracil-C(5))-methyltransferase RlmCD (459 aa).

The TRAM domain maps to 6-64 (PVEKNEYYDVTFEDLTHEGAGVAKVQGFPIFVPNALPEEKAQIKVTRVKKGFAFGRLIE). [4Fe-4S] cluster is bound by residues Cys77, Cys83, Cys86, and Cys166. 4 residues coordinate S-adenosyl-L-methionine: Gln290, Tyr319, Glu340, and Asp388. The active-site Nucleophile is the Cys415.

It belongs to the class I-like SAM-binding methyltransferase superfamily. RNA M5U methyltransferase family.

It carries out the reaction uridine(747) in 23S rRNA + S-adenosyl-L-methionine = 5-methyluridine(747) in 23S rRNA + S-adenosyl-L-homocysteine + H(+). The enzyme catalyses uridine(1939) in 23S rRNA + S-adenosyl-L-methionine = 5-methyluridine(1939) in 23S rRNA + S-adenosyl-L-homocysteine + H(+). In terms of biological role, catalyzes the formation of 5-methyl-uridine at positions 747 (m5U747) and 1939 (m5U1939) in 23S rRNA. The sequence is that of 23S rRNA (uracil-C(5))-methyltransferase RlmCD (rlmCD) from Bacillus subtilis (strain 168).